The primary structure comprises 208 residues: Probable adenylyl-sulfate kinase (208 aa).

Position 38 to 45 (38 to 45) interacts with ATP; it reads GLSGSGKS. S112 acts as the Phosphoserine intermediate in catalysis.

The protein belongs to the APS kinase family.

The catalysed reaction is adenosine 5'-phosphosulfate + ATP = 3'-phosphoadenylyl sulfate + ADP + H(+). It functions in the pathway sulfur metabolism; hydrogen sulfide biosynthesis; sulfite from sulfate: step 2/3. Catalyzes the synthesis of activated sulfate. The sequence is that of Probable adenylyl-sulfate kinase from Halalkalibacterium halodurans (strain ATCC BAA-125 / DSM 18197 / FERM 7344 / JCM 9153 / C-125) (Bacillus halodurans).